Consider the following 524-residue polypeptide: Chromosomal replication initiator protein DnaA (524 aa).

A domain I, interacts with DnaA modulators region spans residues 1–105 (MSQNSSSLLE…EQEIPETPAQ (105 aa)). A disordered region spans residues 95–183 (PEQEIPETPA…PAHNPNREVS (89 aa)). The interval 106–182 (QEFKYQPDAP…TPAHNPNREV (77 aa)) is domain II. Residues 148-158 (APEPHPAPIAD) show a composition bias toward pro residues. Positions 183–399 (SLNPKYTFES…GALIRVSAYS (217 aa)) are domain III, AAA+ region. ATP is bound by residues Gly227, Gly229, Lys230, and Thr231. The segment at 400-524 (SLINQPIDKE…TQLIKSRGRN (125 aa)) is domain IV, binds dsDNA.

Belongs to the DnaA family. In terms of assembly, oligomerizes as a right-handed, spiral filament on DNA at oriC.

It localises to the cytoplasm. Its function is as follows. Plays an essential role in the initiation and regulation of chromosomal replication. ATP-DnaA binds to the origin of replication (oriC) to initiate formation of the DNA replication initiation complex once per cell cycle. Binds the DnaA box (a 9 base pair repeat at the origin) and separates the double-stranded (ds)DNA. Forms a right-handed helical filament on oriC DNA; dsDNA binds to the exterior of the filament while single-stranded (ss)DNA is stabiized in the filament's interior. The ATP-DnaA-oriC complex binds and stabilizes one strand of the AT-rich DNA unwinding element (DUE), permitting loading of DNA polymerase. After initiation quickly degrades to an ADP-DnaA complex that is not apt for DNA replication. Binds acidic phospholipids. The chain is Chromosomal replication initiator protein DnaA from Corynebacterium glutamicum (strain R).